Consider the following 224-residue polypeptide: Metalloproteinase inhibitor 4 (224 aa).

The signal sequence occupies residues 1–29 (MPWSPLAALSWALVLRLLALLWPPGRGEA). Residue Cys-30 participates in Zn(2+) binding. Involved in metalloproteinase-binding stretches follow at residues 30–33 (CSCA) and 99–100 (SS). 6 disulfide bridges follow: Cys-30/Cys-102, Cys-32/Cys-131, Cys-42/Cys-156, Cys-158/Cys-205, Cys-163/Cys-168, and Cys-176/Cys-197. The region spanning 30 to 156 (CSCAPAHPQQ…SLNHHYHQNC (127 aa)) is the NTR domain.

It belongs to the protease inhibitor I35 (TIMP) family. As to expression, expressed in retina, smooth muscle, skin, pancreas, skeletal muscle, heart, brain, lung, kidney and testis. Not found in cartilage, spleen and liver.

It localises to the secreted. Functionally, complexes with metalloproteinases (such as collagenases) and irreversibly inactivates them by binding to their catalytic zinc cofactor. The polypeptide is Metalloproteinase inhibitor 4 (Timp4) (Rattus norvegicus (Rat)).